The sequence spans 883 residues: Probable valine--tRNA ligase, cytoplasmic (883 aa).

A compositionally biased stretch (basic and acidic residues) spans 1-23; it reads MTLKMDRKALKEEKKKQKLEKFL. A disordered region spans residues 1–49; it reads MTLKMDRKALKEEKKKQKLEKFLNKKTTQSKISKAPKPAKNKSSSGYDP. Positions 30-45 are enriched in low complexity; the sequence is SKISKAPKPAKNKSSS. The 'HIGH' region signature appears at 82–92; the sequence is PNITGSLHIGH. Positions 586 to 590 match the 'KMSKS' region motif; that stretch reads KMSKS. ATP is bound at residue lysine 589.

The protein belongs to the class-I aminoacyl-tRNA synthetase family.

The protein localises to the cytoplasm. The catalysed reaction is tRNA(Val) + L-valine + ATP = L-valyl-tRNA(Val) + AMP + diphosphate. The sequence is that of Probable valine--tRNA ligase, cytoplasmic from Vairimorpha ceranae (strain BRL01) (Microsporidian parasite).